We begin with the raw amino-acid sequence, 274 residues long: MQQLQNIIETAFERRAEITPANADTVTREAVNQVIALLDSGALRVAEKIDGQWVTHQWLKKAVLLSFRINDNQVIEGAESRYFDKVPMKFADYDEARFQKEGFRVVPPAAVRQGAFIARNTVLMPSYVNIGAYVDEGTMVDTWATVGSCAQIGKNVHLSGGVGIGGVLEPLQANPTIIEDNCFIGARSEVVEGVIVEEGSVISMGVYIGQSTRIYDRETGDIHYGRVPAGSVVVSGNLPSKDGKYSLYCAVIVKKVDAKTRGKVGINELLRTID.

Arg-104 and Asp-141 together coordinate substrate.

The protein belongs to the transferase hexapeptide repeat family. As to quaternary structure, homotrimer.

The protein localises to the cytoplasm. The catalysed reaction is (S)-2,3,4,5-tetrahydrodipicolinate + succinyl-CoA + H2O = (S)-2-succinylamino-6-oxoheptanedioate + CoA. It functions in the pathway amino-acid biosynthesis; L-lysine biosynthesis via DAP pathway; LL-2,6-diaminopimelate from (S)-tetrahydrodipicolinate (succinylase route): step 1/3. This chain is 2,3,4,5-tetrahydropyridine-2,6-dicarboxylate N-succinyltransferase (dapD), found in Escherichia coli O157:H7.